A 245-amino-acid polypeptide reads, in one-letter code: Orotidine 5'-phosphate decarboxylase (245 aa).

Substrate contacts are provided by residues Asp-22, Lys-44, 71–80, Thr-131, Arg-192, Gln-201, Gly-221, and Arg-222; that span reads DLKFHDIPNT. Lys-73 (proton donor) is an active-site residue.

This sequence belongs to the OMP decarboxylase family. Type 1 subfamily. In terms of assembly, homodimer.

The enzyme catalyses orotidine 5'-phosphate + H(+) = UMP + CO2. Its pathway is pyrimidine metabolism; UMP biosynthesis via de novo pathway; UMP from orotate: step 2/2. Its function is as follows. Catalyzes the decarboxylation of orotidine 5'-monophosphate (OMP) to uridine 5'-monophosphate (UMP). The chain is Orotidine 5'-phosphate decarboxylase from Salmonella typhimurium (strain LT2 / SGSC1412 / ATCC 700720).